Consider the following 449-residue polypeptide: Methylenetetrahydrofolate--tRNA-(uracil-5-)-methyltransferase TrmFO (449 aa).

Position 9 to 14 (9 to 14) interacts with FAD; the sequence is GGGIAG.

The protein belongs to the MnmG family. TrmFO subfamily. FAD serves as cofactor.

Its subcellular location is the cytoplasm. The enzyme catalyses uridine(54) in tRNA + (6R)-5,10-methylene-5,6,7,8-tetrahydrofolate + NADH + H(+) = 5-methyluridine(54) in tRNA + (6S)-5,6,7,8-tetrahydrofolate + NAD(+). It catalyses the reaction uridine(54) in tRNA + (6R)-5,10-methylene-5,6,7,8-tetrahydrofolate + NADPH + H(+) = 5-methyluridine(54) in tRNA + (6S)-5,6,7,8-tetrahydrofolate + NADP(+). Functionally, catalyzes the folate-dependent formation of 5-methyl-uridine at position 54 (M-5-U54) in all tRNAs. This Gloeobacter violaceus (strain ATCC 29082 / PCC 7421) protein is Methylenetetrahydrofolate--tRNA-(uracil-5-)-methyltransferase TrmFO.